A 101-amino-acid polypeptide reads, in one-letter code: MITLTHYLVLGALLFGISAMGIFMNRKNVLVLLMSIELMLLAVNFNFIAFSQHLGDTAGQIFVFFVLTVAAAESAIGLAIMVLVYRNRQTINVADLDELKG.

The next 3 membrane-spanning stretches (helical) occupy residues 4–24 (LTHYLVLGALLFGISAMGIFM), 30–50 (LVLLMSIELMLLAVNFNFIAF), and 61–81 (IFVFFVLTVAAAESAIGLAIM).

It belongs to the complex I subunit 4L family. NDH-1 is composed of 14 different subunits. Subunits NuoA, H, J, K, L, M, N constitute the membrane sector of the complex.

Its subcellular location is the cell inner membrane. It catalyses the reaction a quinone + NADH + 5 H(+)(in) = a quinol + NAD(+) + 4 H(+)(out). Functionally, NDH-1 shuttles electrons from NADH, via FMN and iron-sulfur (Fe-S) centers, to quinones in the respiratory chain. The immediate electron acceptor for the enzyme in this species is believed to be ubiquinone. Couples the redox reaction to proton translocation (for every two electrons transferred, four hydrogen ions are translocated across the cytoplasmic membrane), and thus conserves the redox energy in a proton gradient. The protein is NADH-quinone oxidoreductase subunit K of Neisseria meningitidis serogroup B (strain ATCC BAA-335 / MC58).